Reading from the N-terminus, the 278-residue chain is Probable NADP-dependent mannitol dehydrogenase (278 aa).

NADP(+) contacts are provided by Ile-45, Asn-117, and Lys-152. Active-site proton donor residues include Ser-171 and Tyr-186. NADP(+) contacts are provided by Tyr-186, Lys-190, and Thr-220. Residue Lys-190 is the Lowers pKa of active site Tyr of the active site.

The protein belongs to the short-chain dehydrogenases/reductases (SDR) family. Homotetramer.

It catalyses the reaction D-mannitol + NADP(+) = D-fructose + NADPH + H(+). Its function is as follows. Versatile oxidoreductase that catalyzes the oxidation and reduction of polar as well as non-polar substrates at a very broad pH range. Preferentially oxidizes secondary alcohols. Has highest activity for racemic 2-heptanol and racemic octanol. Is also an efficient reductase for selected substrates. Substrate selectivity was found for medium chain length ketones with the carbonyl function at position C-2. Has highest activities for ribulose and fructose. The enzyme is (R)-selective in the reduction direction and produces exclusively the (R)-enantiomer. This Yarrowia lipolytica (strain CLIB 122 / E 150) (Yeast) protein is Probable NADP-dependent mannitol dehydrogenase.